The following is a 386-amino-acid chain: Benzoyl-CoA reductase subunit C (386 aa).

Belongs to the FldB/FldC dehydratase alpha/beta subunit family. Heterotetramer composed of A, B, C, and D subunits. Iron-sulfur cluster is required as a cofactor. The cofactor is an oxidized flavin.

The catalysed reaction is cyclohexa-1,5-diene-1-carbonyl-CoA + oxidized 2[4Fe-4S]-[ferredoxin] + 2 ADP + 2 phosphate = reduced 2[4Fe-4S]-[ferredoxin] + benzoyl-CoA + 2 ATP + 2 H2O. It catalyses the reaction 3-hydroxybenzoyl-CoA + AH2 + 2 ATP + 2 H2O = 3-hydroxycyclohexa-1,5-diene-1-carbonyl-CoA + A + 2 ADP + 2 phosphate + 2 H(+). Functionally, catalyzes the anaerobic reduction of benzoyl-CoA and 3-hydroxybenzoyl-CoA to form cyclohexa-1,5-diene-1-carbonyl-CoA and 3-hydroxycyclohexa-1,5-diene-1-carbonyl-CoA, respectively. The enzyme also reduces other benzoyl-CoA analogs with small substituents at the aromatic ring. The protein is Benzoyl-CoA reductase subunit C (bcrC) of Thauera aromatica.